The chain runs to 303 residues: Acetylglutamate kinase (303 aa).

Residues 76–77 (GG), Arg98, and Asn192 contribute to the substrate site.

The protein belongs to the acetylglutamate kinase family. ArgB subfamily.

Its subcellular location is the cytoplasm. The enzyme catalyses N-acetyl-L-glutamate + ATP = N-acetyl-L-glutamyl 5-phosphate + ADP. Its pathway is amino-acid biosynthesis; L-arginine biosynthesis; N(2)-acetyl-L-ornithine from L-glutamate: step 2/4. Functionally, catalyzes the ATP-dependent phosphorylation of N-acetyl-L-glutamate. In Chlorobium phaeobacteroides (strain DSM 266 / SMG 266 / 2430), this protein is Acetylglutamate kinase.